A 546-amino-acid chain; its full sequence is Thermolysin (546 aa).

The first 25 residues, 1 to 25, serve as a signal peptide directing secretion; it reads MDKRAMLGAIGLAFGLMAWPFGASA. Positions 26-228 are cleaved as a propeptide — activation peptide; that stretch reads KEKSMVWNEQ…EAKPGGGQPV (203 aa). Ca(2+)-binding residues include Asp287, Asp289, Gln291, and Asp368. Residue His372 coordinates Zn(2+). The active site involves Glu373. Zn(2+) contacts are provided by His376 and Glu396. Ca(2+)-binding residues include Asn413, Asp415, Glu417, Glu420, Tyr423, Thr424, Ile427, and Asp430. His461 (proton donor) is an active-site residue.

Belongs to the peptidase M4 family. The cofactor is Ca(2+). Zn(2+) is required as a cofactor.

Its subcellular location is the secreted. The catalysed reaction is Preferential cleavage: Xaa-|-Leu &gt; Xaa-|-Phe.. Extracellular zinc metalloprotease. Has collagenase activity. This Bacillus sp. (strain EA1) protein is Thermolysin (npr).